The following is a 343-amino-acid chain: tRNA N6-adenosine threonylcarbamoyltransferase (343 aa).

The Fe cation site is built by histidine 111 and histidine 115. Substrate-binding positions include 135 to 139 (VLSGG), aspartate 168, glycine 181, and asparagine 280. Aspartate 306 is a Fe cation binding site.

Belongs to the KAE1 / TsaD family. Requires Fe(2+) as cofactor.

It is found in the cytoplasm. It catalyses the reaction L-threonylcarbamoyladenylate + adenosine(37) in tRNA = N(6)-L-threonylcarbamoyladenosine(37) in tRNA + AMP + H(+). In terms of biological role, required for the formation of a threonylcarbamoyl group on adenosine at position 37 (t(6)A37) in tRNAs that read codons beginning with adenine. Is involved in the transfer of the threonylcarbamoyl moiety of threonylcarbamoyl-AMP (TC-AMP) to the N6 group of A37, together with TsaE and TsaB. TsaD likely plays a direct catalytic role in this reaction. The protein is tRNA N6-adenosine threonylcarbamoyltransferase of Protochlamydia amoebophila (strain UWE25).